The sequence spans 447 residues: ATP-dependent protease ATPase subunit HslU (447 aa).

ATP is bound by residues Ile-17, 59 to 64 (GVGKTE), Asp-256, Glu-321, and Arg-393.

This sequence belongs to the ClpX chaperone family. HslU subfamily. In terms of assembly, a double ring-shaped homohexamer of HslV is capped on each side by a ring-shaped HslU homohexamer. The assembly of the HslU/HslV complex is dependent on binding of ATP.

Its subcellular location is the cytoplasm. ATPase subunit of a proteasome-like degradation complex; this subunit has chaperone activity. The binding of ATP and its subsequent hydrolysis by HslU are essential for unfolding of protein substrates subsequently hydrolyzed by HslV. HslU recognizes the N-terminal part of its protein substrates and unfolds these before they are guided to HslV for hydrolysis. This chain is ATP-dependent protease ATPase subunit HslU, found in Pseudomonas putida (strain ATCC 47054 / DSM 6125 / CFBP 8728 / NCIMB 11950 / KT2440).